We begin with the raw amino-acid sequence, 122 residues long: Cytochrome b-c1 complex subunit 7-1, mitochondrial (122 aa).

The protein belongs to the UQCRB/QCR7 family. Component of the ubiquinol-cytochrome c oxidoreductase (cytochrome b-c1 complex, complex III, CIII), a multisubunit enzyme composed of 10 subunits. The complex is composed of 3 respiratory subunits cytochrome b (MT-CYB), cytochrome c1 (CYC1-1 or CYC1-2) and Rieske protein (UCR1-1 or UCR1-2), 2 core protein subunits MPPalpha1 (or MPPalpha2) and MPPB, and 5 low-molecular weight protein subunits QCR7-1 (or QCR7-2), UCRQ-1 (or UCRQ-2), QCR9, UCRY and probably QCR6-1 (or QCR6-2). The complex exists as an obligatory dimer and forms supercomplexes (SCs) in the inner mitochondrial membrane with NADH-ubiquinone oxidoreductase (complex I, CI), resulting in different assemblies (supercomplexes SCI(1)III(2) and SCI(2)III(4)).

It localises to the mitochondrion inner membrane. Component of the ubiquinol-cytochrome c oxidoreductase, a multisubunit transmembrane complex that is part of the mitochondrial electron transport chain which drives oxidative phosphorylation. The respiratory chain contains 3 multisubunit complexes succinate dehydrogenase (complex II, CII), ubiquinol-cytochrome c oxidoreductase (cytochrome b-c1 complex, complex III, CIII) and cytochrome c oxidase (complex IV, CIV), that cooperate to transfer electrons derived from NADH and succinate to molecular oxygen, creating an electrochemical gradient over the inner membrane that drives transmembrane transport and the ATP synthase. The cytochrome b-c1 complex catalyzes electron transfer from ubiquinol to cytochrome c, linking this redox reaction to translocation of protons across the mitochondrial inner membrane, with protons being carried across the membrane as hydrogens on the quinol. In the process called Q cycle, 2 protons are consumed from the matrix, 4 protons are released into the intermembrane space and 2 electrons are passed to cytochrome c. This Arabidopsis thaliana (Mouse-ear cress) protein is Cytochrome b-c1 complex subunit 7-1, mitochondrial (QCR7-1).